The chain runs to 305 residues: MFDSDHNSIFQSDLCQRLVVHSILLTFLVILLCTSLYPSSAFIVGLLSSACAALGTYEMGAMVRIKFPFSFTRYSALGSAIFIALTCLTARCKMCFPEHIDLLPWFFLFFWTIRLVFKSRHYKLGPIGSTGLALFCMLYVSVPIRLFLHILYGFVHTDTPFVGIWWAIFLIATTKSSDIFGYFFGKAFGKKRIAPVISPNKTVVGFIAGCCGSILVSLLFYSHLPKAFADQIAVPWILIALGTVLGVSGFFGDIIESTFKRDAQIKNSSDLESIGGMLDVLDSLLLSTPIVYAILLITQNRTFLG.

The next 8 membrane-spanning stretches (helical) occupy residues 27 to 47, 67 to 87, 96 to 116, 124 to 144, 150 to 170, 202 to 222, 232 to 252, and 277 to 297; these read FLVILLCTSLYPSSAFIVGLL, FPFSFTRYSALGSAIFIALTC, FPEHIDLLPWFFLFFWTIRLV, LGPIGSTGLALFCMLYVSVPI, ILYGFVHTDTPFVGIWWAIFL, TVVGFIAGCCGSILVSLLFYS, IAVPWILIALGTVLGVSGFFG, and MLDVLDSLLLSTPIVYAILLI.

It belongs to the CDS family.

The protein resides in the cell membrane. It catalyses the reaction a 1,2-diacyl-sn-glycero-3-phosphate + CTP + H(+) = a CDP-1,2-diacyl-sn-glycerol + diphosphate. Its pathway is phospholipid metabolism; CDP-diacylglycerol biosynthesis; CDP-diacylglycerol from sn-glycerol 3-phosphate: step 3/3. This Chlamydia trachomatis serovar D (strain ATCC VR-885 / DSM 19411 / UW-3/Cx) protein is Phosphatidate cytidylyltransferase (cdsA).